The following is a 238-amino-acid chain: Uracil-DNA glycosylase (238 aa).

Catalysis depends on Asp81, which acts as the Proton acceptor.

The protein belongs to the uracil-DNA glycosylase (UDG) superfamily. UNG family.

The protein resides in the cytoplasm. It catalyses the reaction Hydrolyzes single-stranded DNA or mismatched double-stranded DNA and polynucleotides, releasing free uracil.. Its function is as follows. Excises uracil residues from the DNA which can arise as a result of misincorporation of dUMP residues by DNA polymerase or due to deamination of cytosine. In Corynebacterium efficiens (strain DSM 44549 / YS-314 / AJ 12310 / JCM 11189 / NBRC 100395), this protein is Uracil-DNA glycosylase.